Here is a 108-residue protein sequence, read N- to C-terminus: MREKMAEATETQASETSTRGRPKTRVGIVTSNKMQKTVVVTVQRRAPHPKYGKIMSLREKYKAHVEDHDYPKKITINEGDRVRIAETKPASKDKRWRVVEVLEKSKNV.

The tract at residues 1–26 (MREKMAEATETQASETSTRGRPKTRV) is disordered. Over residues 8 to 17 (ATETQASETS) the composition is skewed to low complexity.

It belongs to the universal ribosomal protein uS17 family. As to quaternary structure, part of the 30S ribosomal subunit.

One of the primary rRNA binding proteins, it binds specifically to the 5'-end of 16S ribosomal RNA. In Myxococcus xanthus (strain DK1622), this protein is Small ribosomal subunit protein uS17.